The primary structure comprises 75 residues: Vacuolar ATPase assembly integral membrane protein VMA21 (75 aa).

The Cytoplasmic segment spans residues 1–8; it reads MPVDVAPG. Residues 9 to 29 traverse the membrane as a helical segment; the sequence is VIKKLMFFTAAMVICPLLTFF. Topologically, residues 30-41 are lumenal; that stretch reads SIKQFTTNTIVS. Residues 42-62 form a helical membrane-spanning segment; it reads GGLAALAANLVLIGYIVVAFM. Residues 63-75 are Cytoplasmic-facing; sequence EDTTDVKAESKKD.

Belongs to the VMA21 family.

The protein localises to the endoplasmic reticulum membrane. The protein resides in the endoplasmic reticulum-Golgi intermediate compartment membrane. It localises to the cytoplasmic vesicle. It is found in the COPII-coated vesicle membrane. Functionally, required for the assembly of the V0 complex of the vacuolar ATPase (V-ATPase) in the endoplasmic reticulum. This is Vacuolar ATPase assembly integral membrane protein VMA21 from Vanderwaltozyma polyspora (strain ATCC 22028 / DSM 70294 / BCRC 21397 / CBS 2163 / NBRC 10782 / NRRL Y-8283 / UCD 57-17) (Kluyveromyces polysporus).